We begin with the raw amino-acid sequence, 308 residues long: Tyrosine recombinase XerD (308 aa).

The 87-residue stretch at 3 to 89 folds into the Core-binding (CB) domain; the sequence is NGFTRLTEQF…SIHEFHRFAL (87 aa). The Tyr recombinase domain maps to 110-301; that stretch reads TLPDVLTVDE…SPETLIETYL (192 aa). Residues arginine 153, lysine 177, histidine 253, arginine 256, and histidine 279 contribute to the active site. Residue tyrosine 288 is the O-(3'-phospho-DNA)-tyrosine intermediate of the active site.

The protein belongs to the 'phage' integrase family. XerD subfamily. In terms of assembly, forms a cyclic heterotetrameric complex composed of two molecules of XerC and two molecules of XerD.

The protein resides in the cytoplasm. Its function is as follows. Site-specific tyrosine recombinase, which acts by catalyzing the cutting and rejoining of the recombining DNA molecules. The XerC-XerD complex is essential to convert dimers of the bacterial chromosome into monomers to permit their segregation at cell division. It also contributes to the segregational stability of plasmids. This Bifidobacterium longum (strain NCC 2705) protein is Tyrosine recombinase XerD.